We begin with the raw amino-acid sequence, 378 residues long: Putative glutamate--cysteine ligase 2 (378 aa).

It belongs to the glutamate--cysteine ligase type 2 family. YbdK subfamily.

The enzyme catalyses L-cysteine + L-glutamate + ATP = gamma-L-glutamyl-L-cysteine + ADP + phosphate + H(+). Its function is as follows. ATP-dependent carboxylate-amine ligase which exhibits weak glutamate--cysteine ligase activity. This is Putative glutamate--cysteine ligase 2 from Bdellovibrio bacteriovorus (strain ATCC 15356 / DSM 50701 / NCIMB 9529 / HD100).